We begin with the raw amino-acid sequence, 165 residues long: Histone H1-like protein HC2 (165 aa).

2 stretches are compositionally biased toward basic residues: residues 1-50 (MLGV…KTVA) and 59-80 (PVAK…KKTV). The disordered stretch occupies residues 1-80 (MLGVQKKRST…VRKVAAKKTV (80 aa)).

This sequence belongs to the histone H1/H5 family. HCT subfamily.

Might have a role in establishing the nucleoid structure of elementary bodies. The protein is Histone H1-like protein HC2 (hctB) of Chlamydia trachomatis.